A 242-amino-acid polypeptide reads, in one-letter code: tRNA pseudouridine synthase A (242 aa).

Asp-51 functions as the Nucleophile in the catalytic mechanism. Position 107 (Tyr-107) interacts with substrate.

Belongs to the tRNA pseudouridine synthase TruA family. As to quaternary structure, homodimer.

The enzyme catalyses uridine(38/39/40) in tRNA = pseudouridine(38/39/40) in tRNA. Its function is as follows. Formation of pseudouridine at positions 38, 39 and 40 in the anticodon stem and loop of transfer RNAs. The sequence is that of tRNA pseudouridine synthase A from Helicobacter pylori (strain J99 / ATCC 700824) (Campylobacter pylori J99).